Here is a 483-residue protein sequence, read N- to C-terminus: Probable ATP-dependent RNA helicase DDX49 (483 aa).

The Q motif signature appears at 2-30 (AGFAELGLSSWLVEQCRQLGLKQPTPVQL). One can recognise a Helicase ATP-binding domain in the interval 33–207 (IPAILEGRDC…GLATNQPFFW (175 aa)). 46 to 53 (AKTGSGKT) contacts ATP. The short motif at 152–155 (DEAD) is the DEAD box element. The region spanning 218–382 (QLDQRYLLVP…EFSVEEAEVL (165 aa)) is the Helicase C-terminal domain. The tract at residues 444-483 (KEKVEETLKRQKAGRAGHKGRPPRTPSGSHSGPVPSQGLV) is disordered. Over residues 453–465 (RQKAGRAGHKGRP) the composition is skewed to basic residues.

Belongs to the DEAD box helicase family. DDX49/DBP8 subfamily.

Its subcellular location is the nucleus. It is found in the nucleolus. It catalyses the reaction ATP + H2O = ADP + phosphate + H(+). In terms of biological role, ATP-dependent RNA helicase that plays a role in various aspects of RNA metabolism including the regulation of mRNA export and the levels of pre-ribosomal RNA. Regulates the stability and synthesis of pre-ribosomal RNA and thereby regulates cell proliferation. Also possesses antiviral activity by recognizing gammaherpesvirus transcripts in the context of lytic reactivation. This chain is Probable ATP-dependent RNA helicase DDX49 (DDX49), found in Homo sapiens (Human).